The following is a 293-amino-acid chain: MNSYWLNVYKPRGISSAKLVSIIKKVLGKVKIGHSGTLDVEAEGVLPLAIGEATKLVQMLIDAKKTYIFTVKFGKQTDSGDYAGKVIAITDYIPSKENAYAICSKFIGTITQIPPAFSALKVNGVRAYKLARDGKEVELKPRNITIYDLKCLNYDEQNATATYYAECSKGTYIRTLAEDLALSLQSLGFVIELRRTQVGIFKEENSIRIDSFNDITKLSLEEKNIKIEAILDDILVLDANDEQAQKIKYGQKCLFDYDKNVDFMWVRYKGVLLTIGSLNKNCFHSLRVFNLTQ.

Aspartate 39 (nucleophile) is an active-site residue.

It belongs to the pseudouridine synthase TruB family. Type 1 subfamily.

It carries out the reaction uridine(55) in tRNA = pseudouridine(55) in tRNA. Its function is as follows. Responsible for synthesis of pseudouridine from uracil-55 in the psi GC loop of transfer RNAs. The protein is tRNA pseudouridine synthase B of Rickettsia bellii (strain RML369-C).